Consider the following 300-residue polypeptide: GTP cyclohydrolase FolE2 (300 aa).

It belongs to the GTP cyclohydrolase IV family.

The enzyme catalyses GTP + H2O = 7,8-dihydroneopterin 3'-triphosphate + formate + H(+). Its pathway is cofactor biosynthesis; 7,8-dihydroneopterin triphosphate biosynthesis; 7,8-dihydroneopterin triphosphate from GTP: step 1/1. Converts GTP to 7,8-dihydroneopterin triphosphate. This Bacillus licheniformis (strain ATCC 14580 / DSM 13 / JCM 2505 / CCUG 7422 / NBRC 12200 / NCIMB 9375 / NCTC 10341 / NRRL NRS-1264 / Gibson 46) protein is GTP cyclohydrolase FolE2.